The primary structure comprises 124 residues: Large ribosomal subunit protein bL12 (124 aa).

This sequence belongs to the bacterial ribosomal protein bL12 family. In terms of assembly, homodimer. Part of the ribosomal stalk of the 50S ribosomal subunit. Forms a multimeric L10(L12)X complex, where L10 forms an elongated spine to which 2 to 4 L12 dimers bind in a sequential fashion. Binds GTP-bound translation factors.

Forms part of the ribosomal stalk which helps the ribosome interact with GTP-bound translation factors. Is thus essential for accurate translation. This is Large ribosomal subunit protein bL12 from Anaeromyxobacter dehalogenans (strain 2CP-C).